The following is a 725-amino-acid chain: Exocyst complex component 8 (725 aa).

The residue at position 19 (Ser-19) is a Phosphoserine. The segment at 116–159 is disordered; that stretch reads AASGGEEGGGGAGGRDQLRGQTGFFPSPGGASRDGSGPGEEGKQ. Residues 120–129 show a composition bias toward gly residues; it reads GEEGGGGAGG. A PH domain is found at 182–282; that stretch reads YLVYNGDLVE…WLEVLEETKR (101 aa). A disordered region spans residues 285-322; the sequence is SEKRRREQEEAAAPRGPPQVTPKASNPFEDEDDDEPTV. Positions 312–322 are enriched in acidic residues; that stretch reads FEDEDDDEPTV.

The protein belongs to the EXO84 family. In terms of assembly, the exocyst complex is composed of EXOC1, EXOC2, EXOC3, EXOC4, EXOC5, EXOC6, EXOC7 and EXOC8. Interacts (via PH domain) with GTP-bound RALA and RALB. Interacts with SH3BP1; required for the localization of both SH3BP1 and the exocyst to the leading edge of migrating cells.

The protein localises to the cytoplasm. It is found in the perinuclear region. The protein resides in the cell projection. It localises to the growth cone. Component of the exocyst complex involved in the docking of exocytic vesicles with fusion sites on the plasma membrane. The sequence is that of Exocyst complex component 8 (EXOC8) from Bos taurus (Bovine).